Here is a 289-residue protein sequence, read N- to C-terminus: Zinc finger matrin-type protein 3 (289 aa).

A disordered region spans residues Met1 to Glu42. Over residues Leu9–Pro20 the composition is skewed to pro residues. Residues Ala24–Leu33 are compositionally biased toward polar residues. Matrin-type zinc fingers lie at residues Leu70 to Asn100 and Asp147 to Leu177. A compositionally biased stretch (polar residues) spans Ala180–Leu191. Residues Ala180–Asn201 are disordered. The Matrin-type 3 zinc-finger motif lies at Phe246–Glu276.

As to quaternary structure, interacts with dsRNA. In terms of tissue distribution, highly expressed in adult brain, and moderately in adult kidney and testis. Not detected in fetal brain, heart, pancreas, adrenal gland, liver or small intestine.

Its subcellular location is the nucleus. It is found in the nucleolus. Functionally, acts as a bona fide target gene of p53/TP53. May play a role in the TP53-dependent growth regulatory pathway. May contribute to TP53-mediated apoptosis by regulation of TP53 expression and translocation to the nucleus and nucleolus. This chain is Zinc finger matrin-type protein 3, found in Homo sapiens (Human).